A 403-amino-acid polypeptide reads, in one-letter code: Phosphopentomutase (403 aa).

Residues Asp-13, Asp-298, His-303, Asp-339, His-340, and His-351 each contribute to the Mn(2+) site.

It belongs to the phosphopentomutase family. Requires Mn(2+) as cofactor.

Its subcellular location is the cytoplasm. The catalysed reaction is 2-deoxy-alpha-D-ribose 1-phosphate = 2-deoxy-D-ribose 5-phosphate. The enzyme catalyses alpha-D-ribose 1-phosphate = D-ribose 5-phosphate. Its pathway is carbohydrate degradation; 2-deoxy-D-ribose 1-phosphate degradation; D-glyceraldehyde 3-phosphate and acetaldehyde from 2-deoxy-alpha-D-ribose 1-phosphate: step 1/2. Its function is as follows. Isomerase that catalyzes the conversion of deoxy-ribose 1-phosphate (dRib-1-P) and ribose 1-phosphate (Rib-1-P) to deoxy-ribose 5-phosphate (dRib-5-P) and ribose 5-phosphate (Rib-5-P), respectively. This chain is Phosphopentomutase, found in Streptococcus suis (strain 05ZYH33).